The following is a 155-amino-acid chain: Large ribosomal subunit protein uL22 (155 aa).

The protein belongs to the universal ribosomal protein uL22 family. In terms of assembly, part of the 50S ribosomal subunit.

Its function is as follows. This protein binds specifically to 23S rRNA. It makes multiple contacts with different domains of the 23S rRNA in the assembled 50S subunit and ribosome. In terms of biological role, the globular domain of the protein is located near the polypeptide exit tunnel on the outside of the subunit, while an extended beta-hairpin is found that lines the wall of the exit tunnel in the center of the 70S ribosome. The sequence is that of Large ribosomal subunit protein uL22 from Archaeoglobus fulgidus (strain ATCC 49558 / DSM 4304 / JCM 9628 / NBRC 100126 / VC-16).